Here is a 452-residue protein sequence, read N- to C-terminus: Probable V-type proton ATPase subunit H (452 aa).

Belongs to the V-ATPase H subunit family. V-ATPase is a heteromultimeric enzyme composed of a peripheral catalytic V1 complex (components A to H) attached to an integral membrane V0 proton pore complex (components: a, c, c', c'' and d).

Functionally, subunit of the peripheral V1 complex of vacuolar ATPase. Subunit H activates the ATPase activity of the enzyme and couples ATPase activity to proton flow. Vacuolar ATPase is responsible for acidifying a variety of intracellular compartments in eukaryotic cells, thus providing most of the energy required for transport processes in the vacuolar system. In Oryza sativa subsp. japonica (Rice), this protein is Probable V-type proton ATPase subunit H.